The primary structure comprises 169 residues: Cilia- and flagella-associated protein HOATZ (169 aa).

3 disordered regions span residues 1–21 (METG…MCPP), 52–89 (SQLV…LASN), and 144–169 (KAKE…KTLD). The segment covering 75–89 (SENSHSSQSFHLASN) has biased composition (polar residues).

This sequence belongs to the HOATZ family.

It localises to the cytoplasm. It is found in the cell projection. The protein resides in the cilium. Functionally, required for motile ciliogenesis and flagellar genesis by mediating the maturation of the glycolytic enzyme ENO4. This chain is Cilia- and flagella-associated protein HOATZ, found in Homo sapiens (Human).